A 1736-amino-acid chain; its full sequence is Collagen alpha-2(XI) chain (1736 aa).

Residues 1–27 (MERCSRCHRLLLFLPLVLGLSAAPGWA) form the signal peptide. In terms of domain architecture, Laminin G-like spans 57-228 (DVAYRVARPA…QSCGQKDLEC (172 aa)). The interval 215 to 486 (QAAYQSCGQK…ILQQARLALR (272 aa)) is nonhelical region. 3 disordered regions span residues 228-270 (CERE…PTES), 364-465 (LSAE…DKGP), and 485-1538 (LRGP…GSPA). Residues 258 to 269 (PQSQEPQKQPTE) are compositionally biased toward polar residues. Collagen-like domains follow at residues 399–447 (GPPG…GPPG), 487–545 (GPPG…ADGA), and 546–583 (RGMP…GLPG). Residues 487-1500 (GPPGPMGYTG…PGHPGPPGEV (1014 aa)) are triple-helical region. A compositionally biased stretch (low complexity) spans 497–533 (RPGPLGQPGSPGLKGESGDLGPQGPRGPQGLTGPPGK). Positions 615-624 (KGPPGIPGPP) are enriched in pro residues. The segment covering 650 to 668 (QQGTPGAQGLPGPQGAIGP) has biased composition (low complexity). Residues 682–737 (GMPGSDGLPGHPGKEGPPGTKGNQGPSGPQGPLGYPGPRGVKGVDGIRGLKGHKGE) enclose the Collagen-like 4 domain. The segment covering 765-774 (RGEDGPEGPK) has biased composition (basic and acidic residues). Low complexity-rich tracts occupy residues 776–789 (RTGP…TGLM) and 842–861 (PTGP…SGAK). Collagen-like domains follow at residues 868-924 (GPHG…PGPP), 967-1025 (GDPG…AAGS), 1026-1055 (GGPI…EKGP), 1056-1086 (IGPT…DGDK), and 1114-1172 (GPVG…ETGD). Gly residues predominate over residues 994–1003 (GTAGGPGLKG). A compositionally biased stretch (pro residues) spans 1029-1040 (IGPPGRPGPQGP). Low complexity-rich tracts occupy residues 1115–1133 (PVGQ…ARGP) and 1155–1164 (IGLQGLPGPS). The segment covering 1176–1187 (MGPPGPPGPRGP) has biased composition (pro residues). Residues 1188 to 1197 (AGPNGADGPQ) are compositionally biased toward low complexity. The segment covering 1198 to 1207 (GSPGGVGNLG) has biased composition (gly residues). A compositionally biased stretch (low complexity) spans 1217–1230 (ESGSPGVQGEPGVK). The segment covering 1232-1241 (PRGERGEKGE) has biased composition (basic and acidic residues). Residues 1256-1272 (PTGDNGPKGNPGPVGFP) show a composition bias toward low complexity. Residues 1287–1296 (DGAKGDRGED) show a composition bias toward basic and acidic residues. A compositionally biased stretch (low complexity) spans 1376 to 1386 (QQGRPGATGQA). 2 stretches are compositionally biased toward pro residues: residues 1388-1397 (PPGPVGPPGL) and 1457-1467 (PGGPPGLPGPS). Collagen-like domains lie at 1393–1447 (GPPG…GETG) and 1448–1499 (IPGA…PPGE). Low complexity predominate over residues 1469-1481 (PKGAKGATGPAGP). Positions 1501-1736 (IQPLPIQMPK…VLLGPVCFMG (236 aa)) are cleaved as a propeptide — C-terminal propeptide. The Fibrillar collagen NC1 domain maps to 1541-1735 (EEIFGSLDSL…GVLLGPVCFM (195 aa)). A disulfide bond links C1571 and C1603. 5 residues coordinate Ca(2+): D1589, N1591, Q1592, C1594, and D1597. N1604 carries N-linked (GlcNAc...) asparagine glycosylation. Cystine bridges form between C1612–C1733 and C1655–C1689.

The protein belongs to the fibrillar collagen family. In terms of assembly, trimers composed of three different chains: alpha 1(XI), alpha 2(XI), and alpha 3(XI). Alpha 3(XI) is a post-translational modification of alpha 1(II). Alpha 1(V) can also be found instead of alpha 3(XI)=1(II). Post-translationally, prolines at the third position of the tripeptide repeating unit (G-X-Y) are hydroxylated in some or all of the chains.

The protein resides in the secreted. It is found in the extracellular space. The protein localises to the extracellular matrix. Functionally, may play an important role in fibrillogenesis by controlling lateral growth of collagen II fibrils. In Mus musculus (Mouse), this protein is Collagen alpha-2(XI) chain (Col11a2).